The following is a 414-amino-acid chain: Serine/arginine-rich splicing factor SR45 (414 aa).

Disordered stretches follow at residues 1-95 (MAKP…KAVQ) and 175-414 (LPPR…PRKT). Low complexity-rich tracts occupy residues 10 to 34 (SPSVSGSSSRSSSRSRSGSSPSRSI) and 42 to 60 (RSLSSSSSPSRSVSSGSRS). The Nuclear localization signal 1 signature appears at 62 to 69 (PRRGKSPA). S77 is subject to Phosphoserine. One can recognise an RRM domain in the interval 98–176 (LVLHVDSLSR…KVVKATFTLP (79 aa)). Residues 176 to 191 (PPRQKVSSPPKPVSAA) show a composition bias toward low complexity. Residues 205–220 (DAEKDGGPRRPRETSP) show a composition bias toward basic and acidic residues. Residues 218–219 (TS) form a required for isoform 1 function in petal development region. The span at 228-243 (PRRRSPLPRRGLSPRR) shows a compositional bias: basic residues. The Nuclear localization signal 2 signature appears at 229-236 (RRRSPLPR). S256 carries the post-translational modification Phosphoserine. 3 short sequence motifs (nuclear localization signal) span residues 284-291 (PRRYRSPP), 318-325 (PRRLRSPP), and 338-345 (IRRPGRSR). Basic residues-rich tracts occupy residues 285–343 (RRYR…RPGR) and 352–363 (RKGRGPAGRRGR). Positions 364–373 (SSSYSSSPSP) are enriched in low complexity. Residues 373-380 (PRRIPRKI) carry the Nuclear localization signal 6 motif. Residues 375–394 (RIPRKISRSRSPKRPLRGKR) show a composition bias toward basic residues. Residues 404 to 414 (SPPPPPPPRKT) are compositionally biased toward pro residues.

It belongs to the splicing factor SR family. SR45 subfamily. Component of the spliceosome. Interacts with AFC2, U2AF35A, U2AF35B, RNU1, SCL33 and SKIP. The interaction with AFC2 depends on phosphorylation status. Interaction with RNU1 defines initial 5' splice sites and interaction with U2AF35B 3' splice sites in the early stage of spliceosome assembly. Phosphorylated by AFC2. The phosphorylation status regulates intranuclear distribution. In terms of tissue distribution, especially present in actively growing regions and dividing cells. Mostly expressed in roots (primary and secondary root meristem), shoot apical meristem (SAM), leaf primordia, pollen and inflorescence, and, to a lower extent, in leaves, vascular tissue, hydathode and fruits.

Its subcellular location is the nucleus speckle. The protein localises to the nucleus. It localises to the nucleoplasm. Its function is as follows. Involved in 5' and 3' splicing site selection of introns, and may bridge the 5' and 3' components of the spliceosome. Isoform 1 is required during flower petal development and isoform 2 is involved in root growth. Negatively regulates glucose and abscisic acid (ABA) signaling during early seedling development. Involved in the RNA-directed DNA methylation pathway. Modulates KIN10 stability in response to sugars, probably through the splicing regulation of 5PTASE13, a protein implicated in the proteasomal degradation of KIN10. The polypeptide is Serine/arginine-rich splicing factor SR45 (Arabidopsis thaliana (Mouse-ear cress)).